The chain runs to 171 residues: Endoribonuclease YbeY (171 aa).

The Zn(2+) site is built by His126, His130, and His136.

Belongs to the endoribonuclease YbeY family. The cofactor is Zn(2+).

The protein resides in the cytoplasm. Functionally, single strand-specific metallo-endoribonuclease involved in late-stage 70S ribosome quality control and in maturation of the 3' terminus of the 16S rRNA. The sequence is that of Endoribonuclease YbeY from Rhizobium johnstonii (strain DSM 114642 / LMG 32736 / 3841) (Rhizobium leguminosarum bv. viciae).